We begin with the raw amino-acid sequence, 266 residues long: Probable metal transport system membrane protein TP_0036 (266 aa).

The next 8 membrane-spanning stretches (helical) occupy residues 10 to 30, 34 to 54, 56 to 76, 88 to 108, 120 to 140, 172 to 192, 211 to 231, and 238 to 258; these read AFVA…HLVL, ALMG…AVSC, IHPG…IEFL, LSIV…SGLI, ILVV…FCVG, VASV…GILV, FLLT…LGLV, and VAPG…VIAL.

The protein belongs to the ABC-3 integral membrane protein family.

Its subcellular location is the cell inner membrane. Its function is as follows. Part of an ATP-driven transport system TP_0034/TP_0035/TP_0036 for a metal. This chain is Probable metal transport system membrane protein TP_0036, found in Treponema pallidum (strain Nichols).